The following is a 307-amino-acid chain: Ornithine carbamoyltransferase (307 aa).

Carbamoyl phosphate is bound by residues 51–54, Gln-78, Arg-102, and 129–132; these read STRT and HPCQ. L-ornithine-binding positions include Asn-160, Asp-220, and 224–225; that span reads SM. Carbamoyl phosphate-binding positions include 260–261 and Arg-288; that span reads CL.

This sequence belongs to the aspartate/ornithine carbamoyltransferase superfamily. OTCase family.

It is found in the cytoplasm. The enzyme catalyses carbamoyl phosphate + L-ornithine = L-citrulline + phosphate + H(+). Its pathway is amino-acid biosynthesis; L-arginine biosynthesis; L-arginine from L-ornithine and carbamoyl phosphate: step 1/3. Functionally, reversibly catalyzes the transfer of the carbamoyl group from carbamoyl phosphate (CP) to the N(epsilon) atom of ornithine (ORN) to produce L-citrulline. The protein is Ornithine carbamoyltransferase (argF) of Archaeoglobus fulgidus (strain ATCC 49558 / DSM 4304 / JCM 9628 / NBRC 100126 / VC-16).